The chain runs to 132 residues: Peptide methionine sulfoxide reductase MsrB (132 aa).

The region spanning 9–131 (DAQWRAELSP…NSASLSFHPK (123 aa)) is the MsrB domain. Zn(2+)-binding residues include Cys48, Cys51, Cys97, and Cys100. Cys120 functions as the Nucleophile in the catalytic mechanism.

The protein belongs to the MsrB Met sulfoxide reductase family. It depends on Zn(2+) as a cofactor.

The enzyme catalyses L-methionyl-[protein] + [thioredoxin]-disulfide + H2O = L-methionyl-(R)-S-oxide-[protein] + [thioredoxin]-dithiol. This chain is Peptide methionine sulfoxide reductase MsrB, found in Thiobacillus denitrificans (strain ATCC 25259 / T1).